The following is a 165-amino-acid chain: uncharacterized protein (165 aa).

Positions 68–107 are disordered; sequence LEGAPEWAAPHPEEQRRSPPACSQHTPPLPSTPTGPPPCS. Positions 94 to 107 are enriched in pro residues; the sequence is PPLPSTPTGPPPCS.

This is an uncharacterized protein from Homo sapiens (Human).